Consider the following 602-residue polypeptide: Rho family-interacting cell polarization regulator 2 (602 aa).

The segment at 46–73 is disordered; it reads KKPQAKVKKMHNLGHKNSTTPKEPQPKR. Basic residues predominate over residues 48–59; that stretch reads PQAKVKKMHNLG. Residues 83-112 adopt a coiled-coil conformation; it reads NGLDEYLEVHQTELDKLTAQLKDMRRNSRL. Residues 173 to 421 are necessary for interaction with NCAM and myoblast protrusion formation; that stretch reads RESLTEINRS…TTAATQHRAL (249 aa). The segment at 384 to 474 is disordered; that stretch reads GDLPYEDRVP…RSEVCQKPSN (91 aa). The segment covering 403 to 416 has biased composition (polar residues); that stretch reads AHVSSSPDITTAAT. Low complexity predominate over residues 423–437; the sequence is SSESSSPDCSSSDSC.

It belongs to the RIPOR family. Homooligomer; homooligomerization is regulated by RHOC and leads to the formation of concatemers through the association of N- and C-termini. Interacts with NCAM.

The protein localises to the cytoplasm. The protein resides in the cytoskeleton. Its subcellular location is the cell projection. It is found in the filopodium. It localises to the apical cell membrane. The protein localises to the stereocilium. The protein resides in the stereocilium membrane. Its function is as follows. Acts as an inhibitor of the small GTPase RHOA and plays several roles in the regulation of myoblast and hair cell differentiation, lymphocyte T proliferation and neutrophil polarization. Plays a role in fetal mononuclear myoblast differentiation by promoting filopodia and myotube formation. Maintains naive T lymphocytes in a quiescent state and prevents chemokine-induced T lymphocyte responses, such as cell adhesion, polarization and migration. Involved also in the regulation of neutrophil polarization, chemotaxis and adhesion. Required for normal development of inner and outer hair cell stereocilia within the cochlea of the inner ear. Plays a role for maintaining the structural organization of the basal domain of stereocilia. Involved in mechanosensory hair cell function. Required for normal hearing. In Gallus gallus (Chicken), this protein is Rho family-interacting cell polarization regulator 2.